Reading from the N-terminus, the 351-residue chain is MELSTQMNVFEELLVPTKQETTDNNINNLSFNGGFDHHHHQFFPNGYNIDYLCFNNEEEDENTLLYPSSFMDLISQPPPLLLHQPPPLQPLSPPLSSSATAGATFDYPFLEALQEIIDSSSSSPPLILQNGQEENFNNPMSYPSPLMESDQSKSFSVGYCGGETNKKKSKKLEGQPSKNLMAERRRRKRLNDRLSMLRSIVPKISKMDRTSILGDAIDYMKELLDKINKLQDEEQELGNSNNSHHSKLFGDLKDLNANEPLVRNSPKFEIDRRDEDTRVDICCSPKPGLLLSTVNTLETLGLEIEQCVISCFSDFSLQASCSEGAEQRDFITSEDIKQALFRNAGYGGSCL.

In terms of domain architecture, bHLH spans glycine 174–leucine 223.

As to quaternary structure, homodimer. Interacts with FAMA. Broadly expressed.

The protein localises to the nucleus. Transcription factor. May be involved in the differentiation of stomatal guard cells. The sequence is that of Transcription factor bHLH93 (BHLH93) from Arabidopsis thaliana (Mouse-ear cress).